The sequence spans 198 residues: SCO2-like protein RF_0043 (198 aa).

This sequence belongs to the SCO1/2 family.

The chain is SCO2-like protein RF_0043 from Rickettsia felis (strain ATCC VR-1525 / URRWXCal2) (Rickettsia azadi).